Reading from the N-terminus, the 115-residue chain is uncharacterized protein (115 aa).

The region spanning 1 to 115 (MGVEISLDPP…ETVIKLSAAE (115 aa)) is the MSP domain.

This is an uncharacterized protein from Caenorhabditis elegans.